The following is a 308-amino-acid chain: Probable inositol oxygenase (308 aa).

Substrate is bound by residues R49 and 106–108 (DDS). Residues H119, H144, and D145 each contribute to the Fe cation site. Residues K148 and 165 to 166 (GD) each bind substrate. Fe cation contacts are provided by H217, H243, and D276. 243–244 (HS) contacts substrate.

It belongs to the myo-inositol oxygenase family. Fe cation serves as cofactor.

It is found in the cytoplasm. It catalyses the reaction myo-inositol + O2 = D-glucuronate + H2O + H(+). It participates in polyol metabolism; myo-inositol degradation into D-glucuronate; D-glucuronate from myo-inositol: step 1/1. Involved in the biosynthesis of UDP-glucuronic acid (UDP-GlcA), providing nucleotide sugars for cell-wall polymers. May be also involved in plant ascorbate biosynthesis. In Oryza sativa subsp. japonica (Rice), this protein is Probable inositol oxygenase.